We begin with the raw amino-acid sequence, 200 residues long: 3-isopropylmalate dehydratase small subunit (200 aa).

This sequence belongs to the LeuD family. LeuD type 1 subfamily. Heterodimer of LeuC and LeuD.

The enzyme catalyses (2R,3S)-3-isopropylmalate = (2S)-2-isopropylmalate. It participates in amino-acid biosynthesis; L-leucine biosynthesis; L-leucine from 3-methyl-2-oxobutanoate: step 2/4. Functionally, catalyzes the isomerization between 2-isopropylmalate and 3-isopropylmalate, via the formation of 2-isopropylmaleate. The sequence is that of 3-isopropylmalate dehydratase small subunit from Aliivibrio fischeri (strain ATCC 700601 / ES114) (Vibrio fischeri).